Consider the following 1112-residue polypeptide: Mediator of RNA polymerase II transcription subunit 14 (1112 aa).

It belongs to the Mediator complex subunit 14 family. Component of the Mediator complex.

Its subcellular location is the nucleus. Component of the Mediator complex, a coactivator involved in the regulated transcription of nearly all RNA polymerase II-dependent genes. Mediator functions as a bridge to convey information from gene-specific regulatory proteins to the basal RNA polymerase II transcription machinery. Mediator is recruited to promoters by direct interactions with regulatory proteins and serves as a scaffold for the assembly of a functional preinitiation complex with RNA polymerase II and the general transcription factors. This Scheffersomyces stipitis (strain ATCC 58785 / CBS 6054 / NBRC 10063 / NRRL Y-11545) (Yeast) protein is Mediator of RNA polymerase II transcription subunit 14 (RGR1).